A 144-amino-acid chain; its full sequence is Deoxyuridine 5'-triphosphate nucleotidohydrolase (144 aa).

Substrate is bound by residues 63-65 (RSG), asparagine 76, and 80-82 (TID).

Belongs to the dUTPase family. It depends on Mg(2+) as a cofactor.

The enzyme catalyses dUTP + H2O = dUMP + diphosphate + H(+). It functions in the pathway pyrimidine metabolism; dUMP biosynthesis; dUMP from dCTP (dUTP route): step 2/2. Its function is as follows. This enzyme is involved in nucleotide metabolism: it produces dUMP, the immediate precursor of thymidine nucleotides and it decreases the intracellular concentration of dUTP so that uracil cannot be incorporated into DNA. The polypeptide is Deoxyuridine 5'-triphosphate nucleotidohydrolase (Bacteroides fragilis (strain YCH46)).